Reading from the N-terminus, the 203-residue chain is MAIVINKRNVRVLVITNLLLIVVFFVLRNSNASVNESITTHHPDSLVTFDNSGNAPGTHQSVHDTVNTQDKEAEEVDKNSGDAEFDAAAEYNKIMEQSPMIVFSKTGCPYSKKLKALLTNSYTFSPSYYVVELDRHEHTKELQDQIEKVTGRRTVPNVIIGGTSRGGYTEIAELHKNDELLDSFKKWSDGAFTVKANSQSESA.

Residues 1-32 (MAIVINKRNVRVLVITNLLLIVVFFVLRNSNA) form the signal peptide. The Glutaredoxin domain occupies 88-191 (AAEYNKIMEQ…DSFKKWSDGA (104 aa)). Cysteine 108 provides a ligand contact to [2Fe-2S] cluster.

This sequence belongs to the glutaredoxin family. Monothiol subfamily.

The sequence is that of Monothiol glutaredoxin-7 (GRX7) from Saccharomyces cerevisiae (strain ATCC 204508 / S288c) (Baker's yeast).